Consider the following 317-residue polypeptide: Ribose-phosphate pyrophosphokinase (317 aa).

Residues aspartate 43–glutamate 45 and arginine 102–glutamine 103 each bind ATP. Positions 136 and 175 each coordinate Mg(2+). The active site involves lysine 198. D-ribose 5-phosphate is bound by residues arginine 200, aspartate 224, and aspartate 228–threonine 232.

The protein belongs to the ribose-phosphate pyrophosphokinase family. Class I subfamily. Homohexamer. Requires Mg(2+) as cofactor.

The protein localises to the cytoplasm. The catalysed reaction is D-ribose 5-phosphate + ATP = 5-phospho-alpha-D-ribose 1-diphosphate + AMP + H(+). The protein operates within metabolic intermediate biosynthesis; 5-phospho-alpha-D-ribose 1-diphosphate biosynthesis; 5-phospho-alpha-D-ribose 1-diphosphate from D-ribose 5-phosphate (route I): step 1/1. In terms of biological role, involved in the biosynthesis of the central metabolite phospho-alpha-D-ribosyl-1-pyrophosphate (PRPP) via the transfer of pyrophosphoryl group from ATP to 1-hydroxyl of ribose-5-phosphate (Rib-5-P). In Bacillus anthracis, this protein is Ribose-phosphate pyrophosphokinase.